A 513-amino-acid polypeptide reads, in one-letter code: Glutamate--tRNA ligase 2 (513 aa).

A 'HIGH' region motif is present at residues 11 to 21; sequence PSPTGFLHIGS. A 'KMSKS' region motif is present at residues 240-244; sequence KLSKR. Lys243 is a binding site for ATP. One can recognise an RPE1 insert domain in the interval 335–383; that stretch reads NTLLRHLPYREEFGGNTERSTAAYIDIREDASTGLTYKLPLAVELPKKF.

Belongs to the class-I aminoacyl-tRNA synthetase family. Glutamate--tRNA ligase type 1 subfamily. Monomer.

Its subcellular location is the cytoplasm. It catalyses the reaction tRNA(Glu) + L-glutamate + ATP = L-glutamyl-tRNA(Glu) + AMP + diphosphate. In terms of biological role, catalyzes the attachment of glutamate to tRNA(Glu) in a two-step reaction: glutamate is first activated by ATP to form Glu-AMP and then transferred to the acceptor end of tRNA(Glu). This Rickettsia conorii (strain ATCC VR-613 / Malish 7) protein is Glutamate--tRNA ligase 2.